The chain runs to 188 residues: Transmembrane protein 160 (188 aa).

The transit peptide at 1-96 directs the protein to the mitochondrion; that stretch reads MGGGWWWARA…ISFMQSDMGR (96 aa). A disordered region spans residues 25–52; the sequence is PPRPRSGGARGSFAPGHGPRAGASPPPV. Over residues 29–38 the composition is skewed to low complexity; sequence RSGGARGSFA. A Phosphoserine modification is found at serine 48. Transmembrane regions (helical) follow at residues 102–122 and 135–155; these read FFLL…VGLA and AAAG…AVGL.

The protein belongs to the TMEM160 family.

It localises to the mitochondrion inner membrane. The polypeptide is Transmembrane protein 160 (Bos taurus (Bovine)).